The primary structure comprises 111 residues: Cytochrome c oxidase subunit 6A1, mitochondrial (111 aa).

The transit peptide at Met1–Met26 directs the protein to the mitochondrion. Residues Ser27–Ser36 are Mitochondrial matrix-facing. A helical membrane pass occupies residues Ala37–Leu61. Topologically, residues Lys62–Glu111 are mitochondrial intermembrane.

This sequence belongs to the cytochrome c oxidase subunit 6A family. In terms of assembly, component of the cytochrome c oxidase (complex IV, CIV), a multisubunit enzyme composed of 14 subunits. The complex is composed of a catalytic core of 3 subunits MT-CO1, MT-CO2 and MT-CO3, encoded in the mitochondrial DNA, and 11 supernumerary subunits COX4I, COX5A, COX5B, COX6A, COX6B, COX6C, COX7A, COX7B, COX7C, COX8 and NDUFA4, which are encoded in the nuclear genome. The complex exists as a monomer or a dimer and forms supercomplexes (SCs) in the inner mitochondrial membrane with NADH-ubiquinone oxidoreductase (complex I, CI) and ubiquinol-cytochrome c oxidoreductase (cytochrome b-c1 complex, complex III, CIII), resulting in different assemblies (supercomplex SCI(1)III(2)IV(1) and megacomplex MCI(2)III(2)IV(2)).

It localises to the mitochondrion inner membrane. It functions in the pathway energy metabolism; oxidative phosphorylation. Its function is as follows. Component of the cytochrome c oxidase, the last enzyme in the mitochondrial electron transport chain which drives oxidative phosphorylation. The respiratory chain contains 3 multisubunit complexes succinate dehydrogenase (complex II, CII), ubiquinol-cytochrome c oxidoreductase (cytochrome b-c1 complex, complex III, CIII) and cytochrome c oxidase (complex IV, CIV), that cooperate to transfer electrons derived from NADH and succinate to molecular oxygen, creating an electrochemical gradient over the inner membrane that drives transmembrane transport and the ATP synthase. Cytochrome c oxidase is the component of the respiratory chain that catalyzes the reduction of oxygen to water. Electrons originating from reduced cytochrome c in the intermembrane space (IMS) are transferred via the dinuclear copper A center (CU(A)) of subunit 2 and heme A of subunit 1 to the active site in subunit 1, a binuclear center (BNC) formed by heme A3 and copper B (CU(B)). The BNC reduces molecular oxygen to 2 water molecules unsing 4 electrons from cytochrome c in the IMS and 4 protons from the mitochondrial matrix. This is Cytochrome c oxidase subunit 6A1, mitochondrial (Cox6a1) from Mus musculus (Mouse).